The chain runs to 513 residues: GMP synthase [glutamine-hydrolyzing] (513 aa).

A Glutamine amidotransferase type-1 domain is found at 9–198 (MILVLDFGSQ…VRRICDCTGE (190 aa)). The active-site Nucleophile is cysteine 86. Active-site residues include histidine 172 and glutamate 174. The region spanning 199–388 (WTMENFIDLE…LGIPEHLVWR (190 aa)) is the GMPS ATP-PPase domain. 226-232 (SGGVDSS) lines the ATP pocket.

In terms of assembly, homodimer.

It catalyses the reaction XMP + L-glutamine + ATP + H2O = GMP + L-glutamate + AMP + diphosphate + 2 H(+). It functions in the pathway purine metabolism; GMP biosynthesis; GMP from XMP (L-Gln route): step 1/1. Catalyzes the synthesis of GMP from XMP. This Staphylococcus carnosus (strain TM300) protein is GMP synthase [glutamine-hydrolyzing].